A 475-amino-acid chain; its full sequence is MTQIIHIVGGGLAGSEAAWQVAEAGHRAVIHEMRPVRGTEAHRTDGLAELVCSNSFRSDDPEGNAVGLLHQEMRSLGSLIMRAADTNQVPAGGALAVDREGFSAAVTRALEQHPNVTLVRGEVEGLPPEAWGPCIVATGPLTAPALAEGIRGLTGAESLAFFDAIAPIVHRDSIDMDVAWFQSRYDKPGPGGTGADYLNCPMSREQYDTFVAALVAGEKIGFKQWEGTPYFDGCLPVEVMAERGPETLRHGPMKPVGLTNPRDPLVKPCAIVQLRQDNALGTLYNMVGFQTKLTYSEQVRIFRMIPGLERAEFARLGGLHRNTYLDSPRLLDATLRLRARPSLRFAGQITGCEGYVESAAVGLMAGRFAVAEAAGRPLAPLPQSTALGALIAHITGGHLMADGEANAPRSFQPMNVNFGLFPPLERAPRNETGRRLRGPEKAALKKRALTDRARADLALWLEGARDGAARPAAAE.

9 to 14 (GGGLAG) serves as a coordination point for FAD. The disordered stretch occupies residues 427–447 (APRNETGRRLRGPEKAALKKR).

The protein belongs to the MnmG family. TrmFO subfamily. It depends on FAD as a cofactor.

The protein localises to the cytoplasm. The catalysed reaction is uridine(54) in tRNA + (6R)-5,10-methylene-5,6,7,8-tetrahydrofolate + NADH + H(+) = 5-methyluridine(54) in tRNA + (6S)-5,6,7,8-tetrahydrofolate + NAD(+). It carries out the reaction uridine(54) in tRNA + (6R)-5,10-methylene-5,6,7,8-tetrahydrofolate + NADPH + H(+) = 5-methyluridine(54) in tRNA + (6S)-5,6,7,8-tetrahydrofolate + NADP(+). In terms of biological role, catalyzes the folate-dependent formation of 5-methyl-uridine at position 54 (M-5-U54) in all tRNAs. This is Methylenetetrahydrofolate--tRNA-(uracil-5-)-methyltransferase TrmFO from Methylobacterium radiotolerans (strain ATCC 27329 / DSM 1819 / JCM 2831 / NBRC 15690 / NCIMB 10815 / 0-1).